A 323-amino-acid polypeptide reads, in one-letter code: Aldo-keto reductase family 1 member C4 (323 aa).

Residues 20–24 and D50 contribute to the NADP(+) site; that span reads GFGTY. Y55 serves as the catalytic Proton donor. Residue H117 participates in substrate binding. NADP(+) is bound by residues 166–167, Q190, 216–221, and 270–280; these read SN, HSALGT, and KSYNEQRIREN.

It belongs to the aldo/keto reductase family. As to quaternary structure, monomer.

Its subcellular location is the cytoplasm. The protein resides in the cytosol. It catalyses the reaction chlordecone alcohol + NADP(+) = chlordecone + NADPH + H(+). The catalysed reaction is a 3alpha-hydroxysteroid + NADP(+) = a 3-oxosteroid + NADPH + H(+). The enzyme catalyses a 3alpha-hydroxysteroid + NAD(+) = a 3-oxosteroid + NADH + H(+). It carries out the reaction 5alpha-androstane-3alpha,17beta-diol + NADP(+) = 17beta-hydroxy-5alpha-androstan-3-one + NADPH + H(+). It catalyses the reaction 5alpha-androstane-3beta,17beta-diol + NADP(+) = 17beta-hydroxy-5alpha-androstan-3-one + NADPH + H(+). The catalysed reaction is 5alpha-androstane-3alpha,17beta-diol + NAD(+) = 17beta-hydroxy-5alpha-androstan-3-one + NADH + H(+). The enzyme catalyses 17beta-estradiol + NADP(+) = estrone + NADPH + H(+). It carries out the reaction 17beta-estradiol + NAD(+) = estrone + NADH + H(+). It catalyses the reaction (20S)-hydroxypregn-4-en-3-one + NADP(+) = progesterone + NADPH + H(+). The catalysed reaction is (20S)-hydroxypregn-4-en-3-one + NAD(+) = progesterone + NADH + H(+). The enzyme catalyses androsterone + NADP(+) = 5alpha-androstan-3,17-dione + NADPH + H(+). It carries out the reaction testosterone + NADP(+) = androst-4-ene-3,17-dione + NADPH + H(+). It catalyses the reaction testosterone + NAD(+) = androst-4-ene-3,17-dione + NADH + H(+). The catalysed reaction is 3alpha-hydroxy-5alpha-androstane 17-O-(beta-D-glucuronate) + NADP(+) = 5alpha-dihydrotestosterone 17-O-(beta-D-glucuronate) + NADPH + H(+). The enzyme catalyses (3beta,5alpha,17beta)-3-hydroxy-androstan-17-yl sulfate + NADP(+) = 5alpha-dihydrotestosterone sulfate + NADPH + H(+). It carries out the reaction 5alpha-androstane-3alpha,17beta-diol + NAD(+) = androsterone + NADH + H(+). It functions in the pathway steroid metabolism. Its function is as follows. Cytosolic aldo-keto reductase that catalyzes the NADH and NADPH-dependent reduction of ketosteroids to hydroxysteroids. Liver specific enzyme that acts as an NAD(P)(H)-dependent 3-, 17- and 20-ketosteroid reductase on the steroid nucleus and side chain. Displays the ability to catalyze both oxidation and reduction in vitro, but most probably acts as a reductase in vivo since the oxidase activity measured in vitro is inhibited by physiological concentration of NADPH. Acts preferentially as a 3-alpha-hydroxysteroid dehydrogenase (HSD) with a subsidiary 3-beta-HSD activity. Catalyzes efficiently the transformation of the potent androgen 5-alpha-dihydrotestosterone (5alpha-DHT or 17beta-hydroxy-5alpha-androstan-3-one) into the less active form, 5-alpha-androstan-3-alpha,17-beta-diol (3-alpha-diol). Catalyzes the reduction of estrone into 17beta-estradiol but with low efficiency. Metabolizes a broad spectrum of natural and synthetic therapeutic steroid and plays an important role in metabolism of androgens, estrogens, progestereone and conjugated steroids. Catalyzes the biotransformation of the pesticide chlordecone (kepone) to its corresponding alcohol leading to increased biliary excretion of the pesticide and concomitant reduction of its neurotoxicity since bile is the major excretory route. The sequence is that of Aldo-keto reductase family 1 member C4 (AKR1C4) from Macaca fascicularis (Crab-eating macaque).